A 122-amino-acid chain; its full sequence is Large ribosomal subunit protein uL14c (122 aa).

This sequence belongs to the universal ribosomal protein uL14 family. Part of the 50S ribosomal subunit.

The protein localises to the plastid. The protein resides in the chloroplast. Its function is as follows. Binds to 23S rRNA. This is Large ribosomal subunit protein uL14c from Chloranthus spicatus (Chulantree).